A 481-amino-acid chain; its full sequence is Glycogen synthase (481 aa).

An ADP-alpha-D-glucose-binding site is contributed by Lys16.

It belongs to the glycosyltransferase 1 family. Bacterial/plant glycogen synthase subfamily.

It carries out the reaction [(1-&gt;4)-alpha-D-glucosyl](n) + ADP-alpha-D-glucose = [(1-&gt;4)-alpha-D-glucosyl](n+1) + ADP + H(+). It participates in glycan biosynthesis; glycogen biosynthesis. Its function is as follows. Synthesizes alpha-1,4-glucan chains using ADP-glucose. This Cellvibrio japonicus (strain Ueda107) (Pseudomonas fluorescens subsp. cellulosa) protein is Glycogen synthase.